A 946-amino-acid polypeptide reads, in one-letter code: Inositol-trisphosphate 3-kinase B (946 aa).

Disordered stretches follow at residues 19-128 (EMKS…EEAK), 156-288 (AQSS…TRSC), 308-472 (ARVT…GIPS), 486-561 (KDLK…RKAC), and 580-638 (GALE…HTLD). A phosphoserine mark is found at Ser43, Ser49, and Ser71. The segment covering 83–105 (NSSSGSGSGSSGSSVSSPSWAGR) has biased composition (low complexity). Ser204 and Ser269 each carry phosphoserine. Positions 396–411 (TTVSVQSAESSDSLSW) are enriched in polar residues. The span at 445 to 458 (GGSPTLGLLGGSPS) shows a compositional bias: low complexity. Residues 524 to 534 (TGVQSEGTWES) are compositionally biased toward polar residues. Positions 599–612 (SSSSASSTGFSSSY) are enriched in low complexity. Residues Ser679, Lys690, 730 to 732 (DDL), and Asp743 contribute to the ATP site. Lys745 and Arg766 together coordinate substrate. The segment at 768–776 (DMYQKMIEV) is calmodulin-binding. 793 to 800 (KPRYMQWR) lines the substrate pocket. Lys817 and Asp897 together coordinate ATP. Lys900 is a substrate binding site.

The protein belongs to the inositol phosphokinase (IPK) family. As to quaternary structure, interacts with DMTN.

The protein resides in the cytoplasm. Its subcellular location is the cytoskeleton. The protein localises to the endoplasmic reticulum. The enzyme catalyses 1D-myo-inositol 1,4,5-trisphosphate + ATP = 1D-myo-inositol 1,3,4,5-tetrakisphosphate + ADP + H(+). Its activity is regulated as follows. IP3K is activated by calcium and calmodulin. Form B is much more sensitive to calcium/calmodulin than form A. Functionally, catalyzes the phosphorylation of 1D-myo-inositol 1,4,5-trisphosphate (InsP3) into 1D-myo-inositol 1,3,4,5-tetrakisphosphate and participates to the regulation of calcium homeostasis. The chain is Inositol-trisphosphate 3-kinase B from Homo sapiens (Human).